Consider the following 396-residue polypeptide: L-lactate dehydrogenase (396 aa).

The region spanning 1 to 380 (MIISAASDYR…TQDSLVQGLG (380 aa)) is the FMN hydroxy acid dehydrogenase domain. Tyr24 is a substrate binding site. FMN contacts are provided by Ser106 and Gln127. A substrate-binding site is contributed by Tyr129. Thr155 provides a ligand contact to FMN. Arg164 lines the substrate pocket. Lys251 contacts FMN. Residue His275 is the Proton acceptor of the active site. Residue Arg278 participates in substrate binding. 306–330 (DSGIRNGLDVVRMIALGADTVLLGR) is a binding site for FMN.

It belongs to the FMN-dependent alpha-hydroxy acid dehydrogenase family. FMN is required as a cofactor.

It is found in the cell inner membrane. The enzyme catalyses (S)-lactate + A = pyruvate + AH2. Catalyzes the conversion of L-lactate to pyruvate. Is coupled to the respiratory chain. The protein is L-lactate dehydrogenase of Shigella boydii serotype 4 (strain Sb227).